A 363-amino-acid polypeptide reads, in one-letter code: UDP-N-acetylglucosamine--N-acetylmuramyl-(pentapeptide) pyrophosphoryl-undecaprenol N-acetylglucosamine transferase (363 aa).

UDP-N-acetyl-alpha-D-glucosamine is bound by residues 14-16 (TGG), Arg171, Ser200, and Gln290.

This sequence belongs to the glycosyltransferase 28 family. MurG subfamily.

It localises to the cell inner membrane. The catalysed reaction is di-trans,octa-cis-undecaprenyl diphospho-N-acetyl-alpha-D-muramoyl-L-alanyl-D-glutamyl-meso-2,6-diaminopimeloyl-D-alanyl-D-alanine + UDP-N-acetyl-alpha-D-glucosamine = di-trans,octa-cis-undecaprenyl diphospho-[N-acetyl-alpha-D-glucosaminyl-(1-&gt;4)]-N-acetyl-alpha-D-muramoyl-L-alanyl-D-glutamyl-meso-2,6-diaminopimeloyl-D-alanyl-D-alanine + UDP + H(+). It functions in the pathway cell wall biogenesis; peptidoglycan biosynthesis. Cell wall formation. Catalyzes the transfer of a GlcNAc subunit on undecaprenyl-pyrophosphoryl-MurNAc-pentapeptide (lipid intermediate I) to form undecaprenyl-pyrophosphoryl-MurNAc-(pentapeptide)GlcNAc (lipid intermediate II). The chain is UDP-N-acetylglucosamine--N-acetylmuramyl-(pentapeptide) pyrophosphoryl-undecaprenol N-acetylglucosamine transferase from Borreliella burgdorferi (strain ATCC 35210 / DSM 4680 / CIP 102532 / B31) (Borrelia burgdorferi).